We begin with the raw amino-acid sequence, 897 residues long: Protein translocase subunit SecA (897 aa).

Residues glutamine 87, 105 to 109 (GEGKT), and aspartate 512 contribute to the ATP site. A disordered region spans residues 846-897 (EEEQQKQARKKMVFNLVDEDETSEPSKSKKLAGRNEPCPCGSGKKYKKCCGK). Zn(2+) contacts are provided by cysteine 883, cysteine 885, cysteine 894, and cysteine 895.

It belongs to the SecA family. As to quaternary structure, monomer and homodimer. Part of the essential Sec protein translocation apparatus which comprises SecA, SecYEG and auxiliary proteins SecDF-YajC and YidC. Zn(2+) serves as cofactor.

The protein resides in the cell inner membrane. It is found in the cytoplasm. The enzyme catalyses ATP + H2O + cellular proteinSide 1 = ADP + phosphate + cellular proteinSide 2.. Its function is as follows. Part of the Sec protein translocase complex. Interacts with the SecYEG preprotein conducting channel. Has a central role in coupling the hydrolysis of ATP to the transfer of proteins into and across the cell membrane, serving as an ATP-driven molecular motor driving the stepwise translocation of polypeptide chains across the membrane. This chain is Protein translocase subunit SecA, found in Geobacter sulfurreducens (strain ATCC 51573 / DSM 12127 / PCA).